We begin with the raw amino-acid sequence, 494 residues long: Guanosine-5'-triphosphate,3'-diphosphate pyrophosphatase (494 aa).

The protein belongs to the GppA/Ppx family. GppA subfamily.

It carries out the reaction guanosine 3'-diphosphate 5'-triphosphate + H2O = guanosine 3',5'-bis(diphosphate) + phosphate + H(+). The protein operates within purine metabolism; ppGpp biosynthesis; ppGpp from GTP: step 2/2. Its function is as follows. Catalyzes the conversion of pppGpp to ppGpp. Guanosine pentaphosphate (pppGpp) is a cytoplasmic signaling molecule which together with ppGpp controls the 'stringent response', an adaptive process that allows bacteria to respond to amino acid starvation, resulting in the coordinated regulation of numerous cellular activities. The protein is Guanosine-5'-triphosphate,3'-diphosphate pyrophosphatase of Shigella flexneri serotype 5b (strain 8401).